Here is a 395-residue protein sequence, read N- to C-terminus: Trans-2-enoyl-CoA reductase [NADH] (395 aa).

NAD(+) is bound by residues 47–52 (GASTGY), 73–74 (FE), 110–111 (DA), and 138–139 (LA). Tyr-224 is a binding site for substrate. Residue Tyr-234 is the Proton donor of the active site. NAD(+) is bound by residues Lys-243 and 272–274 (VVT).

The protein belongs to the TER reductase family. In terms of assembly, monomer.

It carries out the reaction a 2,3-saturated acyl-CoA + NAD(+) = a (2E)-enoyl-CoA + NADH + H(+). It functions in the pathway lipid metabolism; fatty acid biosynthesis. Functionally, involved in the fatty acid synthesis (FAS II). Catalyzes the reduction of a carbon-carbon double bond in an enoyl moiety that is covalently linked to a coenzyme A (CoA). The sequence is that of Trans-2-enoyl-CoA reductase [NADH] from Ruminiclostridium cellulolyticum (strain ATCC 35319 / DSM 5812 / JCM 6584 / H10) (Clostridium cellulolyticum).